The sequence spans 492 residues: Catalase isozyme 1 (492 aa).

Catalysis depends on residues histidine 65 and asparagine 138. Tyrosine 348 provides a ligand contact to heme.

Belongs to the catalase family. As to quaternary structure, homotetramer. It depends on heme as a cofactor.

The protein resides in the peroxisome. It carries out the reaction 2 H2O2 = O2 + 2 H2O. Functionally, occurs in almost all aerobically respiring organisms and serves to protect cells from the toxic effects of hydrogen peroxide. In Gossypium hirsutum (Upland cotton), this protein is Catalase isozyme 1 (CAT1).